A 455-amino-acid polypeptide reads, in one-letter code: MGAMAQNPPNLRPDLAPRLVIDSPRREGQPTIGMVSLGCPKALVDSERILTRLRAEGYAISPDYAGADAVIVNTCGFLDSAKAESLEAIGEALRENGRVIVTGCLGAEPDYVTGAHPKVLAVTGPHQYEQVLDAVHGAVPPAPDPFVDLLPATGVRLTPRHFSYLKISEGCNHTCRFCIIPDMRGRLASRPERAVLREAEKLVEAGVRELLVISQDTSAYGTDWKGPEKFPILPLARELGRLGAWVRLHYVYPYPHVRELIPLMAEGLVLPYLDIPFQHAHPEVLKRMARPAAAARTLDEIAAWRRDCPEITLRSTFIVGYPGETEAEFQTLLDWLDEAQLDRVGCFQYENVAGARSNALPDHVAPEVKQERWDRFMEKAQAISEAKLAAKVGRRIEVIVDEVDEDGATCRTKADAPEIDGNLFIDEGFKGLAPGDILTVEVEEAGEYDLWGRPV.

Residues Pro30 to Pro140 enclose the MTTase N-terminal domain. 6 residues coordinate [4Fe-4S] cluster: Cys39, Cys75, Cys104, Cys171, Cys175, and Cys178. The Radical SAM core domain maps to Leu157 to Ala386. The TRAM domain maps to Ala389–Val455.

This sequence belongs to the methylthiotransferase family. RimO subfamily. The cofactor is [4Fe-4S] cluster.

Its subcellular location is the cytoplasm. The catalysed reaction is L-aspartate(89)-[ribosomal protein uS12]-hydrogen + (sulfur carrier)-SH + AH2 + 2 S-adenosyl-L-methionine = 3-methylsulfanyl-L-aspartate(89)-[ribosomal protein uS12]-hydrogen + (sulfur carrier)-H + 5'-deoxyadenosine + L-methionine + A + S-adenosyl-L-homocysteine + 2 H(+). In terms of biological role, catalyzes the methylthiolation of an aspartic acid residue of ribosomal protein uS12. This chain is Ribosomal protein uS12 methylthiotransferase RimO, found in Cereibacter sphaeroides (strain ATCC 17029 / ATH 2.4.9) (Rhodobacter sphaeroides).